We begin with the raw amino-acid sequence, 343 residues long: Probable beta-1,3-galactosyltransferase 13 (343 aa).

Residues 22–42 (LIVFTSLAIGLTGFLFGLSTI) form a helical; Signal-anchor for type II membrane protein membrane-spanning segment. Asn265 is a glycosylation site (N-linked (GlcNAc...) asparagine).

The protein belongs to the glycosyltransferase 31 family. Mn(2+) is required as a cofactor.

The protein resides in the golgi apparatus membrane. It participates in protein modification; protein glycosylation. In terms of biological role, beta-1,3-galactosyltransferase that transfers galactose from UDP-galactose to substrates with a terminal glycosyl residue. The sequence is that of Probable beta-1,3-galactosyltransferase 13 (B3GALT13) from Arabidopsis thaliana (Mouse-ear cress).